The sequence spans 66 residues: Xenoxin-2 (66 aa).

Disulfide bonds link Cys-3-Cys-24, Cys-17-Cys-37, Cys-43-Cys-58, and Cys-59-Cys-64.

In terms of tissue distribution, expressed by the skin dorsal glands.

Its subcellular location is the secreted. Its function is as follows. Lacks alpha-neurotoxic activity, has apparently no antibacterial activity, nor anti-coagulant potency. The sequence is that of Xenoxin-2 from Xenopus laevis (African clawed frog).